The sequence spans 142 residues: MKTFSAKPHEVKRDWFVVDATDKVLGRLAAEIARRLRGKHKPEYTPHVDTGDYIVVVNADKLRVTGNKALDKKYYRHSGYPGGIYERTFTELQNEFPERVLEKAVKGMLPKGPLGYAMIKKLKVYAGAEHPHTAQQPKALEI.

It belongs to the universal ribosomal protein uL13 family. As to quaternary structure, part of the 50S ribosomal subunit.

In terms of biological role, this protein is one of the early assembly proteins of the 50S ribosomal subunit, although it is not seen to bind rRNA by itself. It is important during the early stages of 50S assembly. The chain is Large ribosomal subunit protein uL13 from Laribacter hongkongensis (strain HLHK9).